We begin with the raw amino-acid sequence, 506 residues long: Galactose/methyl galactoside import ATP-binding protein MglA (506 aa).

ABC transporter domains follow at residues 14–249 (LTMT…VGRE) and 264–506 (VILE…AKYL). 46 to 53 (GENGAGKS) serves as a coordination point for ATP.

The protein belongs to the ABC transporter superfamily. Galactose/methyl galactoside importer (TC 3.A.1.2.3) family. As to quaternary structure, the complex is composed of one ATP-binding protein (MglA), two transmembrane proteins (MglC) and a solute-binding protein (MglB).

It is found in the cell inner membrane. It carries out the reaction D-galactose(out) + ATP + H2O = D-galactose(in) + ADP + phosphate + H(+). The catalysed reaction is methyl beta-D-galactoside(out) + ATP + H2O = methyl beta-D-galactoside(in) + ADP + phosphate + H(+). In terms of biological role, part of the ABC transporter complex MglABC involved in galactose/methyl galactoside import. Responsible for energy coupling to the transport system. This Mannheimia succiniciproducens (strain KCTC 0769BP / MBEL55E) protein is Galactose/methyl galactoside import ATP-binding protein MglA.